A 113-amino-acid polypeptide reads, in one-letter code: Small ribosomal subunit protein uS14m (113 aa).

It belongs to the universal ribosomal protein uS14 family. Component of the mitochondrial small ribosomal subunit (mt-SSU). Mature N.crassa 74S mitochondrial ribosomes consist of a small (37S) and a large (54S) subunit. The 37S small subunit contains a 16S ribosomal RNA (16S mt-rRNA) and 32 different proteins. The 54S large subunit contains a 23S rRNA (23S mt-rRNA) and 42 different proteins.

The protein localises to the mitochondrion. Component of the mitochondrial ribosome (mitoribosome), a dedicated translation machinery responsible for the synthesis of mitochondrial genome-encoded proteins, including at least some of the essential transmembrane subunits of the mitochondrial respiratory chain. The mitoribosomes are attached to the mitochondrial inner membrane and translation products are cotranslationally integrated into the membrane. This is Small ribosomal subunit protein uS14m (mrp2) from Neurospora crassa (strain ATCC 24698 / 74-OR23-1A / CBS 708.71 / DSM 1257 / FGSC 987).